A 101-amino-acid polypeptide reads, in one-letter code: Ribonuclease P protein component 1 (101 aa).

This sequence belongs to the eukaryotic/archaeal RNase P protein component 1 family. Consists of a catalytic RNA component and at least 4-5 protein subunits.

It localises to the cytoplasm. It catalyses the reaction Endonucleolytic cleavage of RNA, removing 5'-extranucleotides from tRNA precursor.. Functionally, part of ribonuclease P, a protein complex that generates mature tRNA molecules by cleaving their 5'-ends. The sequence is that of Ribonuclease P protein component 1 from Methanococcoides burtonii (strain DSM 6242 / NBRC 107633 / OCM 468 / ACE-M).